We begin with the raw amino-acid sequence, 273 residues long: Shikimate dehydrogenase (NADP(+)) (273 aa).

Shikimate is bound by residues 14–16 and Thr-61; that span reads SKS. Lys-65 acts as the Proton acceptor in catalysis. Glu-77 is an NADP(+) binding site. Residues Asn-86 and Asp-102 each coordinate shikimate. NADP(+) is bound by residues 126–130, 150–155, and Met-214; these read GAGGA and NRTLSK. Residue Tyr-216 coordinates shikimate. Gly-238 contacts NADP(+).

It belongs to the shikimate dehydrogenase family. In terms of assembly, homodimer.

The catalysed reaction is shikimate + NADP(+) = 3-dehydroshikimate + NADPH + H(+). The protein operates within metabolic intermediate biosynthesis; chorismate biosynthesis; chorismate from D-erythrose 4-phosphate and phosphoenolpyruvate: step 4/7. In terms of biological role, involved in the biosynthesis of the chorismate, which leads to the biosynthesis of aromatic amino acids. Catalyzes the reversible NADPH linked reduction of 3-dehydroshikimate (DHSA) to yield shikimate (SA). The sequence is that of Shikimate dehydrogenase (NADP(+)) from Photobacterium profundum (strain SS9).